The primary structure comprises 232 residues: AA9 family lytic polysaccharide monooxygenase C (232 aa).

The first 19 residues, Met-1–Ala-19, serve as a signal peptide directing secretion. Cu(2+)-binding residues include His-20 and His-91. A disulfide bridge connects residues Cys-61 and Cys-180. His-166 and Gln-175 together coordinate O2. Tyr-177 is a Cu(2+) binding site. The N-linked (GlcNAc...) asparagine glycan is linked to Asn-184.

This sequence belongs to the polysaccharide monooxygenase AA9 family. Cu(2+) is required as a cofactor.

It localises to the secreted. It carries out the reaction [(1-&gt;4)-beta-D-glucosyl]n+m + reduced acceptor + O2 = 4-dehydro-beta-D-glucosyl-[(1-&gt;4)-beta-D-glucosyl]n-1 + [(1-&gt;4)-beta-D-glucosyl]m + acceptor + H2O.. Its function is as follows. Lytic polysaccharide monooxygenase (LPMO) that depolymerizes crystalline and amorphous polysaccharides via the oxidation of scissile alpha- or beta-(1-4)-glycosidic bonds, yielding C1 or C4 oxidation products. Catalysis by LPMOs requires the reduction of the active-site copper from Cu(II) to Cu(I) by a reducing agent and H(2)O(2) or O(2) as a cosubstrate. The sequence is that of AA9 family lytic polysaccharide monooxygenase C from Malbranchea cinnamomea (Thermophilic fungus).